The primary structure comprises 122 residues: Large ribosomal subunit protein uL18 (122 aa).

The tract at residues 1-27 (MATLSKKQQTQKRHKRLRRHLNGTNHR) is disordered. Positions 9-27 (QTQKRHKRLRRHLNGTNHR) are enriched in basic residues.

The protein belongs to the universal ribosomal protein uL18 family. As to quaternary structure, part of the 50S ribosomal subunit; part of the 5S rRNA/L5/L18/L25 subcomplex. Contacts the 5S and 23S rRNAs.

Its function is as follows. This is one of the proteins that bind and probably mediate the attachment of the 5S RNA into the large ribosomal subunit, where it forms part of the central protuberance. The sequence is that of Large ribosomal subunit protein uL18 from Prochlorococcus marinus (strain MIT 9211).